Consider the following 783-residue polypeptide: uncharacterized protein (783 aa).

A disordered region spans residues 1–22; that stretch reads MVNTRGYTTLPNVEEPANNSQD. Topologically, residues 1-109 are cytoplasmic; it reads MVNTRGYTTL…SKIGNVMVMR (109 aa). The helical; Signal-anchor for type II membrane protein transmembrane segment at 110-127 threads the bilayer; it reads RIFYIMMMSIIAALIIAS. Residues 128-783 are Extracellular-facing; it reads DRLPNGKARG…NLHGINTNEF (656 aa). Residues Asn-139 and Asn-213 are each glycosylated (N-linked (GlcNAc...) asparagine). The PA domain maps to 241–333; sequence HNGQLNNIPV…GTGDALTPEW (93 aa). N-linked (GlcNAc...) asparagine glycosylation occurs at Asn-529.

Its subcellular location is the cell membrane. This is an uncharacterized protein from Saccharomyces cerevisiae (strain ATCC 204508 / S288c) (Baker's yeast).